Consider the following 108-residue polypeptide: uncharacterized protein (108 aa).

Residue Gly2 is the site of N-myristoyl glycine; by host attachment.

This is an uncharacterized protein from Acanthamoeba polyphaga (Amoeba).